The following is a 135-amino-acid chain: Protein KRTCAP2 homolog (135 aa).

A run of 4 helical transmembrane segments spans residues 1–21, 35–55, 69–89, and 93–113; these read MAVS…LLFA, PMAI…LTAI, TKLI…SGMV, and CITT…RISI.

The protein belongs to the KRTCAP2 family. In terms of assembly, component of the oligosaccharyltransferase (OST) complex.

The protein localises to the membrane. Its function is as follows. Subunit of the oligosaccharyl transferase (OST) complex that catalyzes the initial transfer of a defined glycan (Glc(3)Man(9)GlcNAc(2) in eukaryotes) from the lipid carrier dolichol-pyrophosphate to an asparagine residue within an Asn-X-Ser/Thr consensus motif in nascent polypeptide chains, the first step in protein N-glycosylation. N-glycosylation occurs cotranslationally and the complex associates with the Sec61 complex at the channel-forming translocon complex that mediates protein translocation across the endoplasmic reticulum (ER). All subunits are required for a maximal enzyme activity. The sequence is that of Protein KRTCAP2 homolog from Ixodes scapularis (Black-legged tick).